The chain runs to 141 residues: Large ribosomal subunit protein uL23B (141 aa).

Positions methionine 1 to alanine 22 are disordered.

This sequence belongs to the universal ribosomal protein uL23 family. Component of the large ribosomal subunit (LSU). Mature yeast ribosomes consist of a small (40S) and a large (60S) subunit. The 40S small subunit contains 1 molecule of ribosomal RNA (18S rRNA) and at least 33 different proteins. The large 60S subunit contains 3 rRNA molecules (25S, 5.8S and 5S rRNA) and at least 46 different proteins. uL23 is associated with the polypeptide exit tunnel.

The protein localises to the cytoplasm. Functionally, this protein binds to a specific region on the 26S rRNA. Component of the ribosome, a large ribonucleoprotein complex responsible for the synthesis of proteins in the cell. The small ribosomal subunit (SSU) binds messenger RNAs (mRNAs) and translates the encoded message by selecting cognate aminoacyl-transfer RNA (tRNA) molecules. The large subunit (LSU) contains the ribosomal catalytic site termed the peptidyl transferase center (PTC), which catalyzes the formation of peptide bonds, thereby polymerizing the amino acids delivered by tRNAs into a polypeptide chain. The nascent polypeptides leave the ribosome through a tunnel in the LSU and interact with protein factors that function in enzymatic processing, targeting, and the membrane insertion of nascent chains at the exit of the ribosomal tunnel. uL23 is a major component of the universal docking site for these factors at the polypeptide exit tunnel. The sequence is that of Large ribosomal subunit protein uL23B (rpl2502) from Schizosaccharomyces pombe (strain 972 / ATCC 24843) (Fission yeast).